A 441-amino-acid polypeptide reads, in one-letter code: Leucine-rich repeat-containing protein 17 (441 aa).

Residues 1–18 (MRVVTIVILLCFCKAAEL) form the signal peptide. LRR repeat units lie at residues 82-103 (DLLH…MFSK), 106-127 (KLKS…AFFG), and 130-151 (KLTT…VFIY). Residues 163-214 (NPWHCTCEIETLISMLQIPRNRNLGNYAKCESPQEQKNKKLRQIKSEQLCNE) enclose the LRRCT 1 domain. Residues 225 to 268 (QVSGRPPVIKPEVDSTFCHNYVFPIQTLDCKRKELKKVPNNIPP) enclose the LRRNT domain. LRR repeat units follow at residues 269-290 (DIVK…EFED), 293-314 (ELKK…AFLG), and 317-340 (HLEE…EDLY). The LRRCT 2 domain occupies 350–402 (NPWRCDYNIHYLYYWLKHHYNVHFNGLECKTPEEYKGWSVGKYIRSYYEECPK).

In terms of tissue distribution, expressed in osteoblast cell lines. Well expressed in ovary, heart, pancreas, skeletal muscle, lung, and fetal kidney and lung and only at the basal levels in the other tissues examined including adult kidney. More expressed in S-type neuroblastoma cells than in N-type neuroblastoma cells.

It is found in the secreted. Its subcellular location is the extracellular space. Involved in bone homeostasis. Acts as a negative regulator of RANKL-induced osteoclast precursor differentiation from bone marrow precursors. The chain is Leucine-rich repeat-containing protein 17 (LRRC17) from Homo sapiens (Human).